The chain runs to 247 residues: Neurotrophic factor BDNF precursor form (247 aa).

Residues 1-18 (MTILFLTMVISYFGCMKA) form the signal peptide. The propeptide occupies 19 to 128 (APMKEANVRG…AANMSMRVRR (110 aa)). Asn-121 carries an N-linked (GlcNAc...) asparagine glycan. 3 disulfide bridges follow: Cys-141-Cys-208, Cys-186-Cys-237, and Cys-196-Cys-239.

It belongs to the NGF-beta family. In terms of assembly, monomers and homodimers. Binds to NTRK2/TRKB. Can form heterodimers with other neurotrophin family members, such as NTF3 and NTF4 (in vitro), but the physiological relevance of this is not clear. BDNF precursor form: interacts with the heterodimer formed by NGFR and SORCS2. Mature BDNF has much lower affinity for the heterodimer formed by NGFR and SORCS2. In terms of processing, N-glycosylated and glycosulfated, contrary to mature BDNF. Mature BDNF is produced by proteolytic removal of the propeptide, catalyzed by a FURIN family member. In addition, the precursor form is proteolytically cleaved within the propeptide, but this is not an obligatory intermediate for the production of mature BDNF. Can be converted into mature BDNF by plasmin (PLG).

Its subcellular location is the secreted. Important signaling molecule that activates signaling cascades downstream of NTRK2. During development, promotes the survival and differentiation of selected neuronal populations of the peripheral and central nervous systems. Participates in axonal growth, pathfinding and in the modulation of dendritic growth and morphology. Major regulator of synaptic transmission and plasticity at adult synapses in many regions of the CNS. The versatility of BDNF is emphasized by its contribution to a range of adaptive neuronal responses including long-term potentiation (LTP), long-term depression (LTD), certain forms of short-term synaptic plasticity, as well as homeostatic regulation of intrinsic neuronal excitability. In terms of biological role, important signaling molecule that activates signaling cascades downstream of NTRK2. Activates signaling cascades via the heterodimeric receptor formed by NGFR and SORCS2. Signaling via NGFR and SORCS2 plays a role in synaptic plasticity and long-term depression (LTD). Binding to NGFR and SORCS2 promotes neuronal apoptosis. Promotes neuronal growth cone collapse. This is Neurotrophic factor BDNF precursor form (BDNF) from Ursus arctos (Brown bear).